A 109-amino-acid polypeptide reads, in one-letter code: Large ribosomal subunit protein P1 (109 aa).

Positions 90 to 109 are disordered; that stretch reads AAAKKEEEEEDDDMGFGLFD.

The protein belongs to the eukaryotic ribosomal protein P1/P2 family. As to quaternary structure, P1 and P2 exist as dimers at the large ribosomal subunit.

Functionally, plays an important role in the elongation step of protein synthesis. The polypeptide is Large ribosomal subunit protein P1 (Trypanosoma cruzi).